Here is a 396-residue protein sequence, read N- to C-terminus: Maltose/maltodextrin-binding periplasmic protein (396 aa).

The N-terminal stretch at 1–26 (MKIKTGARILALSALTTMMFSASALA) is a signal peptide.

It belongs to the bacterial solute-binding protein 1 family. The complex is composed of two ATP-binding proteins (MalK), two transmembrane proteins (MalG and MalF) and a solute-binding protein (MalE).

The protein localises to the periplasm. Functionally, part of the ABC transporter complex MalEFGK involved in maltose/maltodextrin import. Binds maltose and higher maltodextrins. The sequence is that of Maltose/maltodextrin-binding periplasmic protein (malE) from Escherichia coli O157:H7.